We begin with the raw amino-acid sequence, 325 residues long: MSKRIYSRIAGTGSYLPEKVLTNDDMSKIVDTSDEWIFSRTGIRERHIVADDQTTSDLAYFASLKAMEAAGVTAEEIDLIVIGTTTPDLIFPSTACLLQARLGNVGCGAMDVNAACSGFVYALSVADKFVRSGDAKTVLVVGAETLTRIVDWTDRTTCVLFGDGAGAVILKADEETGILSTHLHADGSKKELLWDPVGVSVGFGEGKNGGGALLMKGNDVFKYAVKALDSVVDETLAANGYDKHDLDWLIPHQANLRIIEATAKRLELPMEQVVVTVDRHGNTSSASVPLALDEAVRSGRVQRGQLLLLEAFGGGFTWGSALLRY.

Residues cysteine 116 and histidine 252 contribute to the active site. Positions 253–257 are ACP-binding; the sequence is QANLR. Residue asparagine 282 is part of the active site.

The protein belongs to the thiolase-like superfamily. FabH family. Homodimer.

The protein localises to the cytoplasm. It catalyses the reaction malonyl-[ACP] + acetyl-CoA + H(+) = 3-oxobutanoyl-[ACP] + CO2 + CoA. It participates in lipid metabolism; fatty acid biosynthesis. Functionally, catalyzes the condensation reaction of fatty acid synthesis by the addition to an acyl acceptor of two carbons from malonyl-ACP. Catalyzes the first condensation reaction which initiates fatty acid synthesis and may therefore play a role in governing the total rate of fatty acid production. Possesses both acetoacetyl-ACP synthase and acetyl transacylase activities. Its substrate specificity determines the biosynthesis of branched-chain and/or straight-chain of fatty acids. The chain is Beta-ketoacyl-[acyl-carrier-protein] synthase III from Xanthomonas euvesicatoria pv. vesicatoria (strain 85-10) (Xanthomonas campestris pv. vesicatoria).